The primary structure comprises 400 residues: Deoxyguanosinetriphosphate triphosphohydrolase-like protein (400 aa).

Residues 76 to 204 (RLTHTLEVAQ…VNIADPLAYC (129 aa)) form the HD domain.

Belongs to the dGTPase family. Type 2 subfamily.

The sequence is that of Deoxyguanosinetriphosphate triphosphohydrolase-like protein from Syntrophus aciditrophicus (strain SB).